The primary structure comprises 595 residues: Pentatricopeptide repeat-containing protein At4g21065 (595 aa).

PPR repeat units lie at residues 84-118 (NVFI…GLVE), 120-154 (DTHT…GFGS), 155-185 (LIYV…MPEK), 186-220 (DLVA…GIKP), 221-255 (DGFT…GLTR), 256-290 (NLHS…NSVS), 291-317 (WTSL…MEST), 323-353 (CEIT…MREE), and 359-389 (RIEH…MPMQ). Positions 394–469 (IWRTLLGACT…VPGHSLVEVG (76 aa)) are type E motif. The interval 470–500 (NRVHEFLMGDKSHPQSDAIYAKLKEMTGRLR) is type E(+) motif. Residues 501-595 (SEGYVPQISN…NGSCSCQDYW (95 aa)) are type DYW motif.

It belongs to the PPR family. PCMP-H subfamily.

In Arabidopsis thaliana (Mouse-ear cress), this protein is Pentatricopeptide repeat-containing protein At4g21065 (PCMP-H28).